Reading from the N-terminus, the 189-residue chain is Nucleolar protein 16 (189 aa).

Residues 1–33 show a composition bias toward basic residues; that stretch reads MARDVKKRGKPAYTNRRNRQKYLKKKDNKKKLS. Positions 1 to 34 are disordered; sequence MARDVKKRGKPAYTNRRNRQKYLKKKDNKKKLSK.

Belongs to the NOP16 family.

It is found in the nucleus. It localises to the nucleolus. This chain is Nucleolar protein 16, found in Caenorhabditis elegans.